A 253-amino-acid chain; its full sequence is tRNA (guanine-N(1)-)-methyltransferase (253 aa).

S-adenosyl-L-methionine-binding positions include G110 and I130–L135.

It belongs to the RNA methyltransferase TrmD family. As to quaternary structure, homodimer.

The protein resides in the cytoplasm. The enzyme catalyses guanosine(37) in tRNA + S-adenosyl-L-methionine = N(1)-methylguanosine(37) in tRNA + S-adenosyl-L-homocysteine + H(+). Its function is as follows. Specifically methylates guanosine-37 in various tRNAs. This chain is tRNA (guanine-N(1)-)-methyltransferase, found in Carboxydothermus hydrogenoformans (strain ATCC BAA-161 / DSM 6008 / Z-2901).